The primary structure comprises 43 residues: Pre-protein VI (43 aa).

Residues 1–33 (MEGINFSALAPRYGSRPMLSSWSDIGTSSMNGG) constitute a propeptide that is removed on maturation.

The protein belongs to the adenoviridae protein VI family. In terms of assembly, interacts with hexon protein; this interaction allows nuclear import of hexon trimers and possibly pre-capsid assembly. Interacts (via C-terminal NLS) with importin alpha/beta. Interacts (via PPxY motif) with host NEDD4 ubiquitine ligase; this interaction might play a role in virus intracellular transport during entry. Part of a complex composed of the core-capsid bridging protein, the endosome lysis protein VI and the hexon-linking protein VIII; these interactions bridge the virus core to the capsid. Interacts with peripentonal hexons; this interaction stabilizes the capsid by gluing two peripentonal hexons together and joining them with an adjacent group-of-nine hexon. Protease cofactor: Heterodimer with the viral protease; disulfide-linked. Interacts with the viral protease. In terms of processing, ubiquitinated by Nedd4 following partial capsid disassembly; which might play a role in intracellular virus movement during entry. Protease cofactor: Contains the major nuclear import and export signals. Proteolytically removed during virion maturation. The processing of the C-terminus turns the precursor into a mature viral structural protein and abrogates its ability to promote hexon import and act as a potential chaperone protein.

The protein localises to the host nucleus. Its subcellular location is the host cytoplasm. It is found in the virion. In terms of biological role, during virus assembly, promotes hexon trimers nuclear import through nuclear pore complexes via an importin alpha/beta-dependent mechanism. By analogy to herpesviruses capsid assembly, might act as a chaperone to promote the formation of the icosahedral capsid. Functionally, structural component of the virion that provides increased stability to the particle shell through its interaction with the core-capsid bridging protein and the hexon-linking protein VIII. Fibers shedding during virus entry into host cell allows the endosome lysis protein to be exposed as a membrane-lytic peptide. Exhibits pH-independent membrane fragmentation activity and probably mediates viral rapid escape from host endosome via organellar membrane lysis. It is not clear if it then remains partially associated with the capsid and involved in the intracellular microtubule-dependent transport of capsid to the nucleus, or if it is lost during endosomal penetration. In Bovine adenovirus 2 (BAdV-2), this protein is Pre-protein VI.